A 339-amino-acid polypeptide reads, in one-letter code: Putative zinc metalloprotease FN1322 (339 aa).

Residue H17 participates in Zn(2+) binding. E18 is a catalytic residue. H21 lines the Zn(2+) pocket. 3 helical membrane-spanning segments follow: residues 88 to 110 (FIVL…FVTA), 262 to 284 (FGWI…LNLL), and 318 to 335 (GMIL…NDVW). The PDZ domain occupies 96-179 (FMNFLMAFIL…ITALVERNGK (84 aa)).

This sequence belongs to the peptidase M50B family. Zn(2+) serves as cofactor.

The protein resides in the cell membrane. In Fusobacterium nucleatum subsp. nucleatum (strain ATCC 25586 / DSM 15643 / BCRC 10681 / CIP 101130 / JCM 8532 / KCTC 2640 / LMG 13131 / VPI 4355), this protein is Putative zinc metalloprotease FN1322.